An 800-amino-acid polypeptide reads, in one-letter code: MKYGYFDNDNREYVITRPDVPAPWTNYLGTEKFCTVISHNAGGYSFYHSPEYNRVTKFRPNFTQDRPGHYIYLRDDETGDFWSVSWQPVAKNLDDAHYEVRHGLSYSKFRCDYNGIVATKTLFVPKGEDAQVWDVEIENTSDQPRTISAFGYVEFSFSHIASDNQNHQMSLYSAGTEYNNGVLEYDLYYNTDDFLGFYYLTATFDADSYDGQRDAFLGMYRDEANPIAVANGRCSNSAQTCYNHCGALHKQFVLQPGEKVRFAVILGVGKGNGEKLRAKYQDLSQVDAAFAGIKQHWDERCAKFQVRSPNQGLDTMINAWTLYQAETCVVWSRFASFIEVGGRTGLGYRDTAQDAISVPHTNPAMTRKRLVDLLRGQVKAGYGLHLFDPDWFDPEKADVKPSKSPTVVPTPSDEDKIHGIKDTCSDDHLWIVPTILNFVKETGDLSFIDEVIPYADGGDATVYQHMMAALDFSAEYVGQTGICKGLRADWNDCLNLGGGESAMVSFLHFWALEAFLELARHRQDAAAIDKYQAMANGVREACETHLWDDNGGWYIRGLTKDGDKIGTFEQQEGKVHLESNTLAVLSGAVSQQRGEKAMDAVYEYLFSPYGLHLNAPSFATPNDDIGFVTRVYQGVKENGAIFSHPNPWAWVAEAKLGRGDRAMEFYDSLNPYNQNDIIETRVAEPYSYVQFIMGRDHQDHGRANHPWLTGTSGWAYYATTNFILGVRTGFDTLTVDPCIPAAWSGFEVTREWRGATYHISVQNPNGVSKGVQSILVNGEAVDAINAQPAGSENQVTVILG.

Residues Arg333, Arg343, Arg349, Asp350, Trp490, and Asp492 each contribute to the N-acetyl-alpha-D-glucosamine 1-phosphate site. Asp492 serves as the catalytic Proton donor. N-acetyl-D-glucosamine is bound by residues Asp492, Lys636, and Glu637. The N-acetyl-alpha-D-glucosamine 1-phosphate site is built by Glu637, His644, Gln690, Thr709, and Gly710.

The protein belongs to the glycosyl hydrolase 94 family. Homodimer.

The enzyme catalyses N,N'-diacetylchitobiose + phosphate = N-acetyl-alpha-D-glucosamine 1-phosphate + N-acetyl-D-glucosamine. Functionally, catalyzes the reversible phosphorolysis of chitobiose (N,N'-diacetylchitobiose or (GlcNAc)(2)) into N-acetyl-alpha-D-glucosamine 1-phosphate (GlcNAc-1-P) and N-acetyl-D-glucosamine (GlcNAc) with inversion of the anomeric configuration. The sequence is that of N,N'-diacetylchitobiose phosphorylase from Vibrio furnissii.